An 885-amino-acid chain; its full sequence is Insulin receptor substrate 1-A (885 aa).

In terms of domain architecture, IRS-type PTB spans 1–56 (MNIRRCGHSENFFFIEVGRSAVTGAGEFWMQVDDSVVAQNMHETILEAMKALSDEF). Positions 56–225 (FRPRSKSQSS…GGFISSDEYG (170 aa)) are disordered. Low complexity-rich tracts occupy residues 61–75 (KSQSSSNCSNPISVP), 99–109 (SATATSPAGGA), 176–197 (SPSATSPVSLSSSSTSGHGSTS), and 205–217 (SSASISGSPSDGG). Serine 104 carries the phosphoserine modification. Residue tyrosine 257 is modified to Phosphotyrosine; by INSR. The YXXM motif 1 signature appears at 257 to 260 (YICM). Composition is skewed to polar residues over residues 263-276 (SSSHLQRGPQQRYQ) and 296-313 (SSGTSPPTVSHQKTPSQS). Disordered stretches follow at residues 263 to 282 (SSSHLQRGPQQRYQPSRGEE) and 293 to 313 (RTHSSGTSPPTVSHQKTPSQS). Short sequence motifs (YXXM motif) lie at residues 318-321 (YTEM), 364-367 (YMPM), 381-384 (YMPM), 409-412 (YMMM), and 451-454 (YINM). A phosphotyrosine; by INSR mark is found at tyrosine 364 and tyrosine 381. Tyrosine 409 is modified (phosphotyrosine). The interval 501–581 (NLRISANSGH…LPPEPKSPGE (81 aa)) is disordered. Residues 504-515 (ISANSGHNLYTE) show a composition bias toward polar residues. A compositionally biased stretch (low complexity) spans 516-526 (DSSSSSTSSDS). 2 positions are modified to phosphotyrosine; by INSR: tyrosine 582 and tyrosine 620. The tract at residues 582 to 584 (YVN) is GRB2-binding. The YXXM motif 7 signature appears at 620-623 (YMNM). Polar residues predominate over residues 637-660 (TSSYEPPNKPVNSVCPTETCSSSR). Positions 637 to 665 (TSSYEPPNKPVNSVCPTETCSSSRPPIRG) are disordered. Tyrosine 672 is subject to Phosphotyrosine; by INSR. 2 short sequence motifs (YXXM motif) span residues 672–675 (YMSM) and 706–709 (YAEM). The tract at residues 732 to 803 (ASRSSLLGQG…SGEDVKRHSS (72 aa)) is disordered. Composition is skewed to polar residues over residues 743–758 (GPSAFTRVSLSPNRNP) and 777–792 (ETFSSTPTTARVTTGP). A phosphotyrosine; by INSR mark is found at tyrosine 834 and tyrosine 866.

In terms of assembly, interacts with the NPXY motif of tyrosine-phosphorylated igf1r and insr via the PTB domain. Binds to phosphatidylinositol 3-kinase p85 subunit at a low level in vitro prior to phosphorylation. Binding is greatly enhanced following tyrosine phosphorylation by insr and probably occurs via the phosphorylated YXXM motifs. Phosphorylation of Tyr-582 is required for grb2-binding.

In terms of biological role, may mediate the control of various cellular processes by insulin. When phosphorylated by the insulin receptor binds specifically to various cellular proteins containing SH2 domains such as phosphatidylinositol 3-kinase p85 subunit or grb2. Activates phosphatidylinositol 3-kinase when bound to the regulatory p85 subunit. This is Insulin receptor substrate 1-A (irs1-a) from Xenopus laevis (African clawed frog).